The sequence spans 496 residues: Glycogen synthase (496 aa).

Position 15 (Lys15) interacts with ADP-alpha-D-glucose.

Belongs to the glycosyltransferase 1 family. Bacterial/plant glycogen synthase subfamily.

The catalysed reaction is [(1-&gt;4)-alpha-D-glucosyl](n) + ADP-alpha-D-glucose = [(1-&gt;4)-alpha-D-glucosyl](n+1) + ADP + H(+). It participates in glycan biosynthesis; glycogen biosynthesis. Its function is as follows. Synthesizes alpha-1,4-glucan chains using ADP-glucose. The chain is Glycogen synthase from Natranaerobius thermophilus (strain ATCC BAA-1301 / DSM 18059 / JW/NM-WN-LF).